The following is a 618-amino-acid chain: ELMO domain-containing protein C (618 aa).

A coiled-coil region spans residues 1–72 (MERYRIRRER…EELRLQGDRF (72 aa)). Disordered stretches follow at residues 153-175 (NFDN…KPSL) and 245-276 (TTTT…STTV). Low complexity-rich tracts occupy residues 156–171 (NNNN…NNGN) and 245–275 (TTTT…SSTT). An ELMO domain is found at 382-545 (DHEEYLKHLW…KLKSQLNEIS (164 aa)). 2 stretches are compositionally biased toward low complexity: residues 574-592 (QQQQ…PSSP) and 602-618 (TTTS…TQNN). A disordered region spans residues 574-618 (QQQQQLQQQQQSLPLPSSPRSFLNNYQQTTTSSTSISPSKNTQNN).

In Dictyostelium discoideum (Social amoeba), this protein is ELMO domain-containing protein C (elmoC).